Reading from the N-terminus, the 217-residue chain is Peroxiredoxin (217 aa).

The Thioredoxin domain maps to Pro-2–Val-159. Cys-46 acts as the Cysteine sulfenic acid (-SOH) intermediate in catalysis. Arg-122 is a substrate binding site. Cys-206 and Cys-212 form a disulfide bridge.

This sequence belongs to the peroxiredoxin family. Prx6 subfamily. Homodecamer. Pentamer of dimers that assemble into a ring structure.

It is found in the cytoplasm. It catalyses the reaction a hydroperoxide + [thioredoxin]-dithiol = an alcohol + [thioredoxin]-disulfide + H2O. Its function is as follows. Thiol-specific peroxidase that catalyzes the reduction of hydrogen peroxide and organic hydroperoxides to water and alcohols, respectively. Plays a role in cell protection against oxidative stress by detoxifying peroxides. This Methanocaldococcus jannaschii (strain ATCC 43067 / DSM 2661 / JAL-1 / JCM 10045 / NBRC 100440) (Methanococcus jannaschii) protein is Peroxiredoxin.